We begin with the raw amino-acid sequence, 86 residues long: Large ribosomal subunit protein bL27 (86 aa).

It belongs to the bacterial ribosomal protein bL27 family.

The chain is Large ribosomal subunit protein bL27 from Flavobacterium psychrophilum (strain ATCC 49511 / DSM 21280 / CIP 103535 / JIP02/86).